The chain runs to 470 residues: MGRYSGKTCRLLFMLVLTAAFFVAELVSGYLGNSIALLSDSFNMLSDLISLCVGLGSGYIARRGPRGSSATYGYVRAEVVGALSNAVFLTALCFTIFVEAVLRLARPERIDDPELVLIVGALGLAVNVVGLLIFQDCGACFSRCTRGRRTRPSQQPSQGDPRGALGCPQEAATATAPGSGTAVTLRGSSAGRKQQEGATVFSNVAGDSLNTENEPEETTKKEKKSEALNIRGVLLHVMGDALGSVVVVITAIIFYVQPLRREDPCNWQCYIDPSLTVVMVIIILSSAFPLIKETAVILLQMVPKGVNMEELMSQLSTVPGISSVHEVHIWELISGKIIATLHIKHQKGTEYQDASRKIREIFHHAGIHNVTIQFETLDLKEALEQKDFLLTCSAPCITQSCAKKLCCPPGTLPLALVNGCAEHNGRSSRESYRSIEAPEVAIDVDGCPREQGQTLSKTQERQHYENSTHF.

Over Met-1–Arg-10 the chain is Cytoplasmic. A helical transmembrane segment spans residues Leu-11–Leu-31. Residues Gly-32–Ser-34 are Extracellular-facing. Residues Ile-35–Leu-55 form a helical membrane-spanning segment. At Gly-56 to Gly-81 the chain is on the cytoplasmic side. A helical transmembrane segment spans residues Ala-82–Leu-102. Residues Arg-103 to Pro-113 are Extracellular-facing. Residues Glu-114–Phe-134 form a helical membrane-spanning segment. The Cytoplasmic portion of the chain corresponds to Gln-135–Val-233. The segment at Arg-146–Lys-223 is disordered. Residues Ala-171 to Thr-184 show a composition bias toward low complexity. A helical transmembrane segment spans residues Leu-234–Phe-254. Over Tyr-255 to Tyr-270 the chain is Extracellular. The helical transmembrane segment at Ile-271–Ile-291 threads the bilayer. Topologically, residues Lys-292–Phe-470 are cytoplasmic. The segment at Gln-300–Phe-470 is required for plasma membrane localization. The interval Gln-451 to Phe-470 is disordered. Residues Thr-458–Phe-470 are compositionally biased toward basic and acidic residues.

Belongs to the cation diffusion facilitator (CDF) transporter (TC 2.A.4) family. SLC30A subfamily. As to quaternary structure, forms homodimers. Forms heterodimers and high-molecular weight oligomers with SLC30A3, SLC30A2 and SLC30A4; heterodimerization is mediated by covalent-bound tyrosine residues, occurs probably in a tissue-specific manner and could mediate the intracellular zinc transport activity into early endosomes and recycling endosomes. Specifically expressed in fetal liver and fetal brain.

The protein resides in the cell membrane. The protein localises to the golgi apparatus membrane. It localises to the recycling endosome membrane. It is found in the early endosome membrane. It catalyses the reaction Mn(2+)(out) + Ca(2+)(in) = Mn(2+)(in) + Ca(2+)(out). The catalysed reaction is Zn(2+)(in) = Zn(2+)(out). Calcium:manganese antiporter of the plasma membrane mediating the efflux of intracellular manganese coupled to an active extracellular calcium exchange. Required for intracellular manganese homeostasis, an essential cation for the function of several enzymes, including some crucially important for the metabolism of neurotransmitters and other neuronal metabolic pathways. Manganese can also be cytotoxic and induce oxidative stress, mitochondrial dysfunction and apoptosis. Could also have an intracellular zinc ion transporter activity, directly regulating intracellular zinc ion homeostasis and more indirectly various signaling pathway and biological processes. The sequence is that of Calcium/manganese antiporter SLC30A10 from Mus musculus (Mouse).